A 339-amino-acid polypeptide reads, in one-letter code: Polyhydroxybutyrate depolymerase (339 aa).

The signal sequence occupies residues 1–20; it reads MFDSVKIAWLVALGAAQVAA. S39 is an active-site residue. A disulfide bridge links C70 with C79. D121 is an active-site residue. The N-linked (GlcNAc...) asparagine glycan is linked to N144. Residue H155 is part of the active site. 3 cysteine pairs are disulfide-bonded: C169–C180, C234–C241, and C250–C304. W307 lines the (3R)-hydroxybutanoate trimer pocket.

Belongs to the carbohydrate esterase 1 (CE1) family.

Its subcellular location is the secreted. It carries out the reaction [(3R)-hydroxybutanoate](n) + H2O = [(3R)-hydroxybutanoate](n-1) + (R)-3-hydroxybutanoate + H(+). Its activity is regulated as follows. The enzyme is completely inhibited by dithiothreitol (DTT) and diisopropylfluorophosphate (DFP), and partially inhibited by HgCl(2) and by enzyme3-(p-nitrophenoxy)propane (EPNP). Activity is not affected by N-ethylmaleimide (NEM) or phenylmethylsulfonyl fluoride (PMSF). Esterase involved in the hydrolysis of polyhydroxybutyrate, a microbial polyester that can be produced from renewable resources. The protein is Polyhydroxybutyrate depolymerase of Talaromyces funiculosus (Fruitlet core rot fungus).